Consider the following 56-residue polypeptide: Large ribosomal subunit protein bL32 (56 aa).

The segment at 1 to 56 (MAVQQNRKTRSKRGMRRSHDALSAPTLSQDKETGTTHRRHHVAPDGFYRGRKVVDV) is disordered. Residues 7-16 (RKTRSKRGMR) are compositionally biased toward basic residues.

It belongs to the bacterial ribosomal protein bL32 family.

In Chromohalobacter salexigens (strain ATCC BAA-138 / DSM 3043 / CIP 106854 / NCIMB 13768 / 1H11), this protein is Large ribosomal subunit protein bL32.